The chain runs to 352 residues: Probable dual-specificity RNA methyltransferase RlmN (352 aa).

Glu-99 serves as the catalytic Proton acceptor. Positions 105-325 constitute a Radical SAM core domain; that stretch reads EGDRATLCIS…ESHGYTCTIR (221 aa). Cys-112 and Cys-336 are disulfide-bonded. Residues Cys-119, Cys-123, and Cys-126 each contribute to the [4Fe-4S] cluster site. S-adenosyl-L-methionine is bound by residues 164-165, Ser-196, 217-219, and His-293; these read GE and SLH. The active-site S-methylcysteine intermediate is Cys-336.

Belongs to the radical SAM superfamily. RlmN family. [4Fe-4S] cluster serves as cofactor.

It is found in the cytoplasm. The enzyme catalyses adenosine(2503) in 23S rRNA + 2 reduced [2Fe-2S]-[ferredoxin] + 2 S-adenosyl-L-methionine = 2-methyladenosine(2503) in 23S rRNA + 5'-deoxyadenosine + L-methionine + 2 oxidized [2Fe-2S]-[ferredoxin] + S-adenosyl-L-homocysteine. It carries out the reaction adenosine(37) in tRNA + 2 reduced [2Fe-2S]-[ferredoxin] + 2 S-adenosyl-L-methionine = 2-methyladenosine(37) in tRNA + 5'-deoxyadenosine + L-methionine + 2 oxidized [2Fe-2S]-[ferredoxin] + S-adenosyl-L-homocysteine. Its function is as follows. Specifically methylates position 2 of adenine 2503 in 23S rRNA and position 2 of adenine 37 in tRNAs. The protein is Probable dual-specificity RNA methyltransferase RlmN of Porphyromonas gingivalis (strain ATCC 33277 / DSM 20709 / CIP 103683 / JCM 12257 / NCTC 11834 / 2561).